Here is a 219-residue protein sequence, read N- to C-terminus: 2-hydroxy-3-keto-5-methylthiopentenyl-1-phosphate phosphatase (219 aa).

It belongs to the HAD-like hydrolase superfamily. MtnX family.

It catalyses the reaction 2-hydroxy-5-methylsulfanyl-3-oxopent-1-enyl phosphate + H2O = 1,2-dihydroxy-5-(methylsulfanyl)pent-1-en-3-one + phosphate. It functions in the pathway amino-acid biosynthesis; L-methionine biosynthesis via salvage pathway; L-methionine from S-methyl-5-thio-alpha-D-ribose 1-phosphate: step 4/6. Its function is as follows. Dephosphorylates 2-hydroxy-3-keto-5-methylthiopentenyl-1-phosphate (HK-MTPenyl-1-P) yielding 1,2-dihydroxy-3-keto-5-methylthiopentene (DHK-MTPene). The sequence is that of 2-hydroxy-3-keto-5-methylthiopentenyl-1-phosphate phosphatase from Bacillus anthracis (strain A0248).